Reading from the N-terminus, the 360-residue chain is Phospho-N-acetylmuramoyl-pentapeptide-transferase (360 aa).

10 helical membrane-spanning segments follow: residues Ile-27 to Trp-47, Thr-73 to Leu-93, Ser-94 to Val-114, Trp-132 to Gly-152, Val-168 to Ser-188, Gly-199 to Thr-219, Ala-236 to Phe-256, Val-263 to Leu-283, Phe-288 to Val-308, and Val-338 to Lys-358.

It belongs to the glycosyltransferase 4 family. MraY subfamily. Mg(2+) serves as cofactor.

It is found in the cell inner membrane. It carries out the reaction UDP-N-acetyl-alpha-D-muramoyl-L-alanyl-gamma-D-glutamyl-meso-2,6-diaminopimeloyl-D-alanyl-D-alanine + di-trans,octa-cis-undecaprenyl phosphate = di-trans,octa-cis-undecaprenyl diphospho-N-acetyl-alpha-D-muramoyl-L-alanyl-D-glutamyl-meso-2,6-diaminopimeloyl-D-alanyl-D-alanine + UMP. It functions in the pathway cell wall biogenesis; peptidoglycan biosynthesis. In terms of biological role, catalyzes the initial step of the lipid cycle reactions in the biosynthesis of the cell wall peptidoglycan: transfers peptidoglycan precursor phospho-MurNAc-pentapeptide from UDP-MurNAc-pentapeptide onto the lipid carrier undecaprenyl phosphate, yielding undecaprenyl-pyrophosphoryl-MurNAc-pentapeptide, known as lipid I. This Pectobacterium atrosepticum (strain SCRI 1043 / ATCC BAA-672) (Erwinia carotovora subsp. atroseptica) protein is Phospho-N-acetylmuramoyl-pentapeptide-transferase.